Reading from the N-terminus, the 400-residue chain is MSSKLVLVLNCGSSSLKFAIIDPANGDEYLSGLAECFHLPEARIKWKLDGAKQEAALGAGAAHSEALNFMVKTILAQKPELSAQIAAIGHRIVHGGEKLTHSVVIDESVIQGIKDASSFAPLHNPAHLIGIDEALKNFPHLSDKNVAVFDTAFHQTMPEESYLYALPYKLYKEHGVRRYGAHGTSHYYVTQEAAKALNKPVSELNIITCHLGNGGSVAAIRHGECVDTSMGLTPLEGLVMGTRSGDLDPAIIFFLHDTLGMNVGAINNMLTKESGLLGLTEVTSDCRYVEDNYDSKADAKRAMDVYCHRLAKYIGSYSAQMDGRLDAVIFTGGIGENSSMVRELTLNKLALLGIEVDAERNLAARFGKSGFINKEGTRPVLVLPTNEELVIAQDASRLTA.

Asn10 is a Mg(2+) binding site. Residue Lys17 coordinates ATP. Position 91 (Arg91) interacts with substrate. Asp150 (proton donor/acceptor) is an active-site residue. Residues 210–214 (HLGNG), 285–287 (DCR), and 333–337 (GIGEN) each bind ATP. Mg(2+) is bound at residue Glu387.

This sequence belongs to the acetokinase family. As to quaternary structure, homodimer. Mg(2+) serves as cofactor. Requires Mn(2+) as cofactor.

It is found in the cytoplasm. It carries out the reaction acetate + ATP = acetyl phosphate + ADP. It functions in the pathway metabolic intermediate biosynthesis; acetyl-CoA biosynthesis; acetyl-CoA from acetate: step 1/2. Its function is as follows. Catalyzes the formation of acetyl phosphate from acetate and ATP. Can also catalyze the reverse reaction. This is Acetate kinase from Erwinia tasmaniensis (strain DSM 17950 / CFBP 7177 / CIP 109463 / NCPPB 4357 / Et1/99).